A 609-amino-acid polypeptide reads, in one-letter code: Chaperone protein DnaK (609 aa).

T172 carries the phosphothreonine; by autocatalysis modification. The interval 578–609 (QAQAQQQAGAGGAAKKDENVVDAEFEEVKDDK) is disordered. The span at 597–609 (VVDAEFEEVKDDK) shows a compositional bias: acidic residues.

It belongs to the heat shock protein 70 family.

Acts as a chaperone. In Geobacillus sp. (strain WCH70), this protein is Chaperone protein DnaK.